The sequence spans 382 residues: Mannosyl phosphorylinositol ceramide synthase SUR1 (382 aa).

Over 1–6 (MRKELK) the chain is Cytoplasmic. The helical transmembrane segment at 7–27 (YLICFNILLLLSIIYYTFDLL) threads the bilayer. At 28–269 (TLCIDDTVKD…KALENHILSC (242 aa)) the chain is on the extracellular side. The chain crosses the membrane as a helical span at residues 270–290 (VVTGFIFGFFILYGEFTFYCW). Over 291-382 (LCSKNFSNLT…SKYSLGNNSS (92 aa)) the chain is Cytoplasmic. Position 349 is a phosphoserine (S349).

Belongs to the glycosyltransferase 32 family. Heterodimer of SUR1 and CSG2.

It is found in the membrane. The catalysed reaction is a 1D-myo-inositol-1-phospho-N-[(R)-2-hydroxy-very-long-chain fatty acyl]-(R)-4-hydroxysphingoid base + GDP-alpha-D-mannose = an alpha-D-mannosyl-(1&lt;-&gt;6)-1D-myo-inositol-1-phospho-N-[(R)-2-hydroxy-very-long-chain fatty acyl]-(R)-4-hydroxysphingoid base + GDP + H(+). Involved in the synthesis of mannosyl phosphorylinositol ceramide. Catalyzes the addition of mannosyl to phosphorylinositol ceramide. Suppressor of RVS161 mutation. This is Mannosyl phosphorylinositol ceramide synthase SUR1 from Saccharomyces cerevisiae (strain ATCC 204508 / S288c) (Baker's yeast).